Reading from the N-terminus, the 348-residue chain is Phenylalanine--tRNA ligase alpha subunit (348 aa).

E259 contacts Mg(2+).

This sequence belongs to the class-II aminoacyl-tRNA synthetase family. Phe-tRNA synthetase alpha subunit type 1 subfamily. Tetramer of two alpha and two beta subunits. It depends on Mg(2+) as a cofactor.

The protein localises to the cytoplasm. It carries out the reaction tRNA(Phe) + L-phenylalanine + ATP = L-phenylalanyl-tRNA(Phe) + AMP + diphosphate + H(+). In Ligilactobacillus salivarius (strain UCC118) (Lactobacillus salivarius), this protein is Phenylalanine--tRNA ligase alpha subunit.